The chain runs to 280 residues: UBX domain-containing protein 10 (280 aa).

The interval 41 to 94 is disordered; sequence SAKGRTRPSLQKSQGVEVCAHHIPSPPPAIPYELPSSQKPGACAPKSPNQGASD. Serine 87 is subject to Phosphoserine. A UBX domain is found at 194 to 271; it reads DQEPRLLLAV…RIPHKSVLGI (78 aa).

It belongs to the UBXN10 family. Interacts with CLUAP1; the interaction is direct and mediates interaction with the intraflagellar transport complex B (IFT-B). Interacts with VCP; the interaction is direct.

It is found in the cell projection. Its subcellular location is the cilium. VCP/p97-binding protein required for ciliogenesis. Acts as a tethering factor that facilitates recruitment of VCP/p97 to the intraflagellar transport complex B (IFT-B) in cilia. UBX domain-containing proteins act as tethering factors for VCP/p97 and may specify substrate specificity of VCP/p97. In Homo sapiens (Human), this protein is UBX domain-containing protein 10.